Consider the following 898-residue polypeptide: Vacuolar protein sorting-associated protein 41 homolog (898 aa).

The segment covering 1-10 (MDESNDKENE) has biased composition (basic and acidic residues). A disordered region spans residues 1–35 (MDESNDKENEFGDSFLEDSGDITRTTEDEDEAPLE). Residues 614-756 (LRLLLDNADS…VADFPTHFSQ (143 aa)) form a CHCR repeat. Residues 835–890 (CSLCSQVIMNTGQDMIPRKFNDIKVFKCGHIFHLTCSASEIDRRQMIEDGICIACS) form an RING-type; atypical zinc finger.

Belongs to the VPS41 family. Probable component of the homotypic fusion and vacuole protein sorting (HOPS) complex consisting of the core class C Vps proteins vps-11, vps-16, vps-18, and which further associates with vps-33.1, vps-39 and vps-41.

Its subcellular location is the endosome membrane. It localises to the late endosome. It is found in the lysosome. The protein resides in the golgi apparatus. The protein localises to the trans-Golgi network. Its subcellular location is the early endosome. It localises to the cytoplasmic vesicle. It is found in the clathrin-coated vesicle. Functionally, plays a role in vesicle-mediated protein trafficking to lysosomal compartments including the endocytic membrane transport pathways. Believed to act in part as a core component of the putative HOPS endosomal tethering complex which is proposed to be involved in the rab-5-to-rab-7 endosome conversion probably implicating sand-1, and via binding SNAREs and SNARE complexes to mediate tethering and docking events during SNARE-mediated membrane fusion. The HOPS complex is proposed to be recruited to rab-7 on the late endosomal membrane and to regulate late endocytic, phagocytic and autophagic traffic towards lysosomes. Within the HOPS complex, contributes to the normal development of gut granules in the adult intestine. May mediate the tethering of autophagosomes with lysosomes. Has a role in the negative regulation of apoptosis. Required for uptake of exogenous dsRNA which is used in experimental RNA silencing. The sequence is that of Vacuolar protein sorting-associated protein 41 homolog from Caenorhabditis briggsae.